A 372-amino-acid polypeptide reads, in one-letter code: 12-oxophytodienoate reductase 1 (372 aa).

At Met-1 the chain carries N-acetylmethionine. Residues 31-33 (PLT), Ala-64, and Gln-106 each bind FMN. His-183 contacts substrate. Catalysis depends on Tyr-188, which acts as the Proton donor. Arg-235 serves as a coordination point for FMN. Arg-275 serves as a coordination point for substrate. FMN contacts are provided by residues 303-305 (AGG) and 326-327 (GR).

It belongs to the NADH:flavin oxidoreductase/NADH oxidase family. It depends on FMN as a cofactor. Mostly expressed in roots, also present in leaves, shoots and flowers. More abundant in cotyledons. In more details, expressed in peduncles, sepals, petals, around the abscission zone of siliques, maturing siliques and developing seeds.

The protein localises to the cytoplasm. The enzyme catalyses (1S,2S)-OPC-8 + NADP(+) = (9S,13S,15Z)-12-oxophyto-10,15-dienoate + NADPH + H(+). The protein operates within lipid metabolism; oxylipin biosynthesis. In terms of biological role, specifically cleaves olefinic bonds in alpha,beta-unsaturated carbonyls and may be involved in detoxification or modification of these reactive compounds. May be involved in the biosynthesis or metabolism of oxylipin signaling molecules. In vitro, reduces 9R,13R-12-oxophytodienoic acid (9R,13R-OPDA) to 9R,13R-OPC-8:0, but only poorly 9S,13S-OPDA, the natural precursor of jasmonic acid. Can detoxify the explosive 2,4,6-trinitrotoluene (TNT) in vitro and in vivo by catalyzing its nitroreduction to form hydroxylamino-dinitrotoluene (HADNT). This is 12-oxophytodienoate reductase 1 from Arabidopsis thaliana (Mouse-ear cress).